Here is a 688-residue protein sequence, read N- to C-terminus: MSYQVLARKWRPKTFADVVGQEHIITALANGLKDNRLHHAYLFSGTRGVGKTSIARLFAKGLNCVHGVTATPCGECENCKAIEQGNFIDLIEIDAASRTKVEDTRELLDNVQYKPVVGRFKVYLIDEVHMLSRHSFNALLKTLEEPPEYVKFLLATTDPQKLPVTILSRCLQFHLKALDETQISQHLAHILTQENIPFEDPALVKLAKAAQGSIRDSLSLTDQAIAMGDRQVTNNVVSNMLGLLDDNYSVDILYALHQGNGELLMRTLQRVADAAGDWDKLLGECAEKLHQIALMQLLPQKSSDNNEHFSFLAKHISPENVQFFYQVIVSGRKDLSNAPNRRIGAEMTLLRALAFHPKFLTAVPKANTTITPPPSTPSAVENTGNYVDVPVLSQSIKSAYSQAKPNKTSIPNLASLSALDALEHLTQLENQERQEHKAESLAVVSETLHHIQELDEEKSHKKMTALPVREMTEPKPKHIEKPTLPSNAAQAPQKNSTEENSSDDNVEIAQDEQEILSADTYRWEWSNPELAKADTGVCPSDIKQAILKDITPELRLKIITQTQQQDQWADIVERSGLTGFSKELALNCFLQSKTDDEINLGLHSEKSHLRQDRSIKNLAEALSKLQGKDIRLTINLDDSNVTTPIEYRRNIYQALREKAQNELQKDSKLQILLNEFDAKLDVESIRPV.

ATP is bound at residue 45-52 (GTRGVGKT). The Zn(2+) site is built by C64, C73, C76, and C79. The tract at residues 452-506 (QELDEEKSHKKMTALPVREMTEPKPKHIEKPTLPSNAAQAPQKNSTEENSSDDNV) is disordered. Residues 470 to 481 (EMTEPKPKHIEK) are compositionally biased toward basic and acidic residues. Residues 484 to 499 (LPSNAAQAPQKNSTEE) show a composition bias toward polar residues.

It belongs to the DnaX/STICHEL family. DNA polymerase III contains a core (composed of alpha, epsilon and theta chains) that associates with a tau subunit. This core dimerizes to form the POLIII' complex. PolIII' associates with the gamma complex (composed of gamma, delta, delta', psi and chi chains) and with the beta chain to form the complete DNA polymerase III complex.

It catalyses the reaction DNA(n) + a 2'-deoxyribonucleoside 5'-triphosphate = DNA(n+1) + diphosphate. In terms of biological role, DNA polymerase III is a complex, multichain enzyme responsible for most of the replicative synthesis in bacteria. This DNA polymerase also exhibits 3' to 5' exonuclease activity. The sequence is that of DNA polymerase III subunit tau/gamma (dnaX) from Haemophilus influenzae (strain ATCC 51907 / DSM 11121 / KW20 / Rd).